The sequence spans 413 residues: Aspartate aminotransferase, cytoplasmic (413 aa).

Residues Gly39 and Trp141 each coordinate L-aspartate. At Ser149 the chain carries Phosphoserine. Asn195 is a binding site for L-aspartate. An N6-(pyridoxal phosphate)lysine modification is found at Lys259. Arg387 serves as a coordination point for L-aspartate.

This sequence belongs to the class-I pyridoxal-phosphate-dependent aminotransferase family. In terms of assembly, homodimer. Pyridoxal 5'-phosphate is required as a cofactor.

Its subcellular location is the cytoplasm. The catalysed reaction is L-aspartate + 2-oxoglutarate = oxaloacetate + L-glutamate. It catalyses the reaction L-cysteine + 2-oxoglutarate = 2-oxo-3-sulfanylpropanoate + L-glutamate. It carries out the reaction (2S)-2-aminobutanoate + 2-oxoglutarate = 2-oxobutanoate + L-glutamate. The enzyme catalyses 3-sulfino-L-alanine + 2-oxoglutarate = 3-sulfinopyruvate + L-glutamate. Functionally, biosynthesis of L-glutamate from L-aspartate or L-cysteine. Important regulator of levels of glutamate, the major excitatory neurotransmitter of the vertebrate central nervous system. Acts as a scavenger of glutamate in brain neuroprotection. The aspartate aminotransferase activity is involved in hepatic glucose synthesis during development and in adipocyte glyceroneogenesis. Using L-cysteine as substrate, regulates levels of mercaptopyruvate, an important source of hydrogen sulfide. Mercaptopyruvate is converted into H(2)S via the action of 3-mercaptopyruvate sulfurtransferase (3MST). Hydrogen sulfide is an important synaptic modulator and neuroprotectant in the brain. In addition, catalyzes (2S)-2-aminobutanoate, a by-product in the cysteine biosynthesis pathway. The protein is Aspartate aminotransferase, cytoplasmic of Homo sapiens (Human).